Consider the following 713-residue polypeptide: Peroxisomal biogenesis factor 8 (713 aa).

The disordered stretch occupies residues 1–31; the sequence is MYRLGSQGRSIQSQLQNGDSSSGRPLQLQGT. Residues 7–30 are compositionally biased toward polar residues; it reads QGRSIQSQLQNGDSSSGRPLQLQG. The short motif at 711-713 is the Microbody targeting signal element; that stretch reads AKL.

As to quaternary structure, interacts with PEX5 (via N-terminus).

Its subcellular location is the peroxisome membrane. Essential component of the machinery required for the import of both PTS1 and PTS2 (and perhaps all) peroxisomal matrix proteins. Binding of PEX8 to the N-terminus of PEX5 cargo receptor induces a conformational change of the TPR domains and decrease their binding affinity to cargo, facilitating the release of the PTS1 proteins within the peroxisome. The polypeptide is Peroxisomal biogenesis factor 8 (Komagataella phaffii (strain GS115 / ATCC 20864) (Yeast)).